The primary structure comprises 382 residues: Transcription termination/antitermination protein NusA (382 aa).

The S1 motif domain occupies 135-199; sequence EDIMTGIVQR…KGPQIMISRT (65 aa). The KH domain maps to 301-367; the sequence is EKTTQVIVPD…TLALDQETAD (67 aa). The tract at residues 348-382 is disordered; that stretch reads LLEDEAASHETLALDQETADQPEATVETSKNHEEE.

Belongs to the NusA family. In terms of assembly, monomer. Binds directly to the core enzyme of the DNA-dependent RNA polymerase and to nascent RNA.

The protein resides in the cytoplasm. Participates in both transcription termination and antitermination. The protein is Transcription termination/antitermination protein NusA of Halalkalibacterium halodurans (strain ATCC BAA-125 / DSM 18197 / FERM 7344 / JCM 9153 / C-125) (Bacillus halodurans).